A 479-amino-acid polypeptide reads, in one-letter code: Aspartyl/glutamyl-tRNA(Asn/Gln) amidotransferase subunit B (479 aa).

The protein belongs to the GatB/GatE family. GatB subfamily. Heterotrimer of A, B and C subunits.

It carries out the reaction L-glutamyl-tRNA(Gln) + L-glutamine + ATP + H2O = L-glutaminyl-tRNA(Gln) + L-glutamate + ADP + phosphate + H(+). The enzyme catalyses L-aspartyl-tRNA(Asn) + L-glutamine + ATP + H2O = L-asparaginyl-tRNA(Asn) + L-glutamate + ADP + phosphate + 2 H(+). Functionally, allows the formation of correctly charged Asn-tRNA(Asn) or Gln-tRNA(Gln) through the transamidation of misacylated Asp-tRNA(Asn) or Glu-tRNA(Gln) in organisms which lack either or both of asparaginyl-tRNA or glutaminyl-tRNA synthetases. The reaction takes place in the presence of glutamine and ATP through an activated phospho-Asp-tRNA(Asn) or phospho-Glu-tRNA(Gln). The protein is Aspartyl/glutamyl-tRNA(Asn/Gln) amidotransferase subunit B of Streptococcus pyogenes serotype M5 (strain Manfredo).